We begin with the raw amino-acid sequence, 216 residues long: ATP synthase subunit C lysine N-methyltransferase (216 aa).

Residue M1 is modified to N-acetylmethionine. Positions 1–12 (MERGETPEEERQ) are enriched in basic and acidic residues. A disordered region spans residues 1–25 (MERGETPEEERQSGCVLPTSPESDS). The chain crosses the membrane as a helical span at residues 31-50 (WGFLITGVIGGALVTVYAVT). Residues 51 to 85 (TPFIAPALRKVCLPFVPATSRQVENVVKMLQHRRG) are required for mitochondrial location.

This sequence belongs to the ANT/ATPSC lysine N-methyltransferase family.

It is found in the mitochondrion membrane. The catalysed reaction is L-lysyl-[protein] + 3 S-adenosyl-L-methionine = N(6),N(6),N(6)-trimethyl-L-lysyl-[protein] + 3 S-adenosyl-L-homocysteine + 3 H(+). In terms of biological role, mitochondrial protein-lysine N-methyltransferase that trimethylates ATP synthase subunit C, ATP5MC1 and ATP5MC2. Trimethylation is required for proper incorporation of the C subunit into the ATP synthase complex and mitochondrial respiration. Promotes chronic pain. Involved in persistent inflammatory and neuropathic pain: methyltransferase activity in the mitochondria of sensory neurons promotes chronic pain via a pathway that depends on the production of reactive oxygen species (ROS) and on the engagement of spinal cord microglia. This Rattus norvegicus (Rat) protein is ATP synthase subunit C lysine N-methyltransferase (Atpsckmt).